Consider the following 340-residue polypeptide: Beta-ketoacyl-[acyl-carrier-protein] synthase III (340 aa).

Active-site residues include Cys119 and His260. Positions 261–265 (QANYR) are ACP-binding. Asn290 is a catalytic residue.

Belongs to the thiolase-like superfamily. FabH family. As to quaternary structure, homodimer.

Its subcellular location is the cytoplasm. The enzyme catalyses malonyl-[ACP] + acetyl-CoA + H(+) = 3-oxobutanoyl-[ACP] + CO2 + CoA. It participates in lipid metabolism; fatty acid biosynthesis. Catalyzes the condensation reaction of fatty acid synthesis by the addition to an acyl acceptor of two carbons from malonyl-ACP. Catalyzes the first condensation reaction which initiates fatty acid synthesis and may therefore play a role in governing the total rate of fatty acid production. Possesses both acetoacetyl-ACP synthase and acetyl transacylase activities. Its substrate specificity determines the biosynthesis of branched-chain and/or straight-chain of fatty acids. The protein is Beta-ketoacyl-[acyl-carrier-protein] synthase III of Sulfurovum sp. (strain NBC37-1).